The following is a 715-amino-acid chain: Fatty acid oxidation complex subunit alpha (715 aa).

The enoyl-CoA hydratase/isomerase stretch occupies residues Met-1 to Ala-189. Asp-296 provides a ligand contact to substrate. A 3-hydroxyacyl-CoA dehydrogenase region spans residues Ala-311–Tyr-715. Residues Met-325, Asp-344, Val-401 to Glu-403, Lys-408, and Ser-430 contribute to the NAD(+) site. The active-site For 3-hydroxyacyl-CoA dehydrogenase activity is the His-451. Asn-454 contacts NAD(+). The substrate site is built by Asn-501 and Tyr-661.

It in the N-terminal section; belongs to the enoyl-CoA hydratase/isomerase family. This sequence in the C-terminal section; belongs to the 3-hydroxyacyl-CoA dehydrogenase family. Heterotetramer of two alpha chains (FadB) and two beta chains (FadA).

The enzyme catalyses a (3S)-3-hydroxyacyl-CoA + NAD(+) = a 3-oxoacyl-CoA + NADH + H(+). It carries out the reaction a (3S)-3-hydroxyacyl-CoA = a (2E)-enoyl-CoA + H2O. The catalysed reaction is a 4-saturated-(3S)-3-hydroxyacyl-CoA = a (3E)-enoyl-CoA + H2O. It catalyses the reaction (3S)-3-hydroxybutanoyl-CoA = (3R)-3-hydroxybutanoyl-CoA. The enzyme catalyses a (3Z)-enoyl-CoA = a 4-saturated (2E)-enoyl-CoA. It carries out the reaction a (3E)-enoyl-CoA = a 4-saturated (2E)-enoyl-CoA. It participates in lipid metabolism; fatty acid beta-oxidation. Functionally, involved in the aerobic and anaerobic degradation of long-chain fatty acids via beta-oxidation cycle. Catalyzes the formation of 3-oxoacyl-CoA from enoyl-CoA via L-3-hydroxyacyl-CoA. It can also use D-3-hydroxyacyl-CoA and cis-3-enoyl-CoA as substrate. This is Fatty acid oxidation complex subunit alpha from Aeromonas salmonicida (strain A449).